Here is a 401-residue protein sequence, read N- to C-terminus: Imidazolonepropionase (401 aa).

Residues His70 and His72 each coordinate Fe(3+). His70 and His72 together coordinate Zn(2+). The 4-imidazolone-5-propanoate site is built by Arg79, Tyr142, and His175. Residue Tyr142 coordinates N-formimidoyl-L-glutamate. His238 contributes to the Fe(3+) binding site. Residue His238 coordinates Zn(2+). Gln241 contacts 4-imidazolone-5-propanoate. Residue Asp313 participates in Fe(3+) binding. Asp313 serves as a coordination point for Zn(2+). 2 residues coordinate N-formimidoyl-L-glutamate: Asn315 and Gly317. Thr318 contacts 4-imidazolone-5-propanoate.

This sequence belongs to the metallo-dependent hydrolases superfamily. HutI family. Requires Zn(2+) as cofactor. The cofactor is Fe(3+).

The protein localises to the cytoplasm. It carries out the reaction 4-imidazolone-5-propanoate + H2O = N-formimidoyl-L-glutamate. It functions in the pathway amino-acid degradation; L-histidine degradation into L-glutamate; N-formimidoyl-L-glutamate from L-histidine: step 3/3. In terms of biological role, catalyzes the hydrolytic cleavage of the carbon-nitrogen bond in imidazolone-5-propanoate to yield N-formimidoyl-L-glutamate. It is the third step in the universal histidine degradation pathway. This Acidiphilium cryptum (strain JF-5) protein is Imidazolonepropionase.